The sequence spans 114 residues: Turripeptide OL22 (114 aa).

Post-translationally, contains 6 disulfide bonds. Expressed by the venom duct.

The protein localises to the secreted. Its function is as follows. Acts as a neurotoxin by inhibiting an ion channel. The sequence is that of Turripeptide OL22 from Iotyrris olangoensis (Sea snail).